A 136-amino-acid chain; its full sequence is Small nuclear ribonucleoprotein Sm D3 (136 aa).

The 73-residue stretch at 6 to 78 folds into the Sm domain; sequence VPIKILHEAE…IRFMILPDML (73 aa). Residues 98 to 136 form a disordered region; the sequence is GLGGLDQRGRGRGTAFRRPMGRGGPRGMSRPGGAPTFRG.

It belongs to the snRNP core protein family.

The protein localises to the nucleus. Its subcellular location is the cytoplasm. It is found in the cytosol. Its function is as follows. Plays a role in pre-mRNA splicing as a core component of the spliceosomal U1, U2, U4 and U5 small nuclear ribonucleoproteins (snRNPs), the building blocks of the spliceosome. The chain is Small nuclear ribonucleoprotein Sm D3 (snr-1) from Caenorhabditis elegans.